The following is a 383-amino-acid chain: Queuine tRNA-ribosyltransferase (383 aa).

Catalysis depends on aspartate 92, which acts as the Proton acceptor. Substrate contacts are provided by residues 92-96 (DSGGF), aspartate 146, glutamine 190, and glycine 217. The tract at residues 248 to 254 (GVGKPED) is RNA binding. The Nucleophile role is filled by aspartate 267. Positions 272 to 276 (TRNAR) are RNA binding; important for wobble base 34 recognition. Residues cysteine 310, cysteine 312, cysteine 315, and histidine 341 each coordinate Zn(2+).

This sequence belongs to the queuine tRNA-ribosyltransferase family. As to quaternary structure, homodimer. Within each dimer, one monomer is responsible for RNA recognition and catalysis, while the other monomer binds to the replacement base PreQ1. The cofactor is Zn(2+).

The catalysed reaction is 7-aminomethyl-7-carbaguanine + guanosine(34) in tRNA = 7-aminomethyl-7-carbaguanosine(34) in tRNA + guanine. The protein operates within tRNA modification; tRNA-queuosine biosynthesis. In terms of biological role, catalyzes the base-exchange of a guanine (G) residue with the queuine precursor 7-aminomethyl-7-deazaguanine (PreQ1) at position 34 (anticodon wobble position) in tRNAs with GU(N) anticodons (tRNA-Asp, -Asn, -His and -Tyr). Catalysis occurs through a double-displacement mechanism. The nucleophile active site attacks the C1' of nucleotide 34 to detach the guanine base from the RNA, forming a covalent enzyme-RNA intermediate. The proton acceptor active site deprotonates the incoming PreQ1, allowing a nucleophilic attack on the C1' of the ribose to form the product. After dissociation, two additional enzymatic reactions on the tRNA convert PreQ1 to queuine (Q), resulting in the hypermodified nucleoside queuosine (7-(((4,5-cis-dihydroxy-2-cyclopenten-1-yl)amino)methyl)-7-deazaguanosine). This Psychrobacter sp. (strain PRwf-1) protein is Queuine tRNA-ribosyltransferase.